The sequence spans 201 residues: Holliday junction resolvase RecU (201 aa).

The Mg(2+) site is built by T85, D87, D100, and Q119.

This sequence belongs to the RecU family. Mg(2+) is required as a cofactor.

The protein localises to the cytoplasm. It carries out the reaction Endonucleolytic cleavage at a junction such as a reciprocal single-stranded crossover between two homologous DNA duplexes (Holliday junction).. Its function is as follows. Endonuclease that resolves Holliday junction intermediates in genetic recombination. Cleaves mobile four-strand junctions by introducing symmetrical nicks in paired strands. Promotes annealing of linear ssDNA with homologous dsDNA. Required for DNA repair, homologous recombination and chromosome segregation. This chain is Holliday junction resolvase RecU, found in Pediococcus pentosaceus (strain ATCC 25745 / CCUG 21536 / LMG 10740 / 183-1w).